Reading from the N-terminus, the 487-residue chain is 3-octaprenyl-4-hydroxybenzoate carboxy-lyase (487 aa).

Residue N172 participates in Mn(2+) binding. Residues 175-177, 189-191, and 194-195 contribute to the prenylated FMN site; these read IYR, RWL, and RG. E238 is a binding site for Mn(2+). D287 (proton donor) is an active-site residue.

This sequence belongs to the UbiD family. In terms of assembly, homohexamer. The cofactor is prenylated FMN. Mn(2+) serves as cofactor.

The protein localises to the cell membrane. It catalyses the reaction a 4-hydroxy-3-(all-trans-polyprenyl)benzoate + H(+) = a 2-(all-trans-polyprenyl)phenol + CO2. Its pathway is cofactor biosynthesis; ubiquinone biosynthesis. In terms of biological role, catalyzes the decarboxylation of 3-octaprenyl-4-hydroxy benzoate to 2-octaprenylphenol, an intermediate step in ubiquinone biosynthesis. The chain is 3-octaprenyl-4-hydroxybenzoate carboxy-lyase from Actinobacillus pleuropneumoniae serotype 3 (strain JL03).